Consider the following 90-residue polypeptide: Small ribosomal subunit protein bS16 (90 aa).

It belongs to the bacterial ribosomal protein bS16 family.

The polypeptide is Small ribosomal subunit protein bS16 (Oceanobacillus iheyensis (strain DSM 14371 / CIP 107618 / JCM 11309 / KCTC 3954 / HTE831)).